The primary structure comprises 520 residues: Bile acid--coenzyme A ligase (520 aa).

The protein belongs to the ATP-dependent AMP-binding enzyme family. In terms of assembly, homodimer. Mg(2+) serves as cofactor.

It carries out the reaction cholate + ATP + CoA = choloyl-CoA + AMP + diphosphate. The catalysed reaction is deoxycholate + ATP + CoA = deoxycholoyl-CoA + AMP + diphosphate. The enzyme catalyses chenodeoxycholate + ATP + CoA = chenodeoxycholoyl-CoA + AMP + diphosphate. The protein operates within lipid metabolism; bile acid biosynthesis. Its activity is regulated as follows. Inhibited by diphosphate. In terms of biological role, functions in the bile acid 7alpha-dehydroxylation pathway, which forms secondary bile acids via the 7alpha-dehydroxylation of primary bile acids, and is carried out by intestinal anaerobic bacteria. Catalyzes the initial step in this pathway, i.e. the ATP-dependent thioesterification of primary bile acids with coenzyme A. Is active with C-24 bile acids with free carboxyl groups such as cholate, deoxycholate and chenodeoxycholate. Produces AMP and pyrophosphate in addition to the bile acid-CoA thioester. In Clostridium scindens (strain JCM 10418 / VPI 12708), this protein is Bile acid--coenzyme A ligase.